Consider the following 424-residue polypeptide: Histidine--tRNA ligase (424 aa).

Belongs to the class-II aminoacyl-tRNA synthetase family. As to quaternary structure, homodimer.

It is found in the cytoplasm. It catalyses the reaction tRNA(His) + L-histidine + ATP = L-histidyl-tRNA(His) + AMP + diphosphate + H(+). In Marinomonas sp. (strain MWYL1), this protein is Histidine--tRNA ligase.